We begin with the raw amino-acid sequence, 375 residues long: Nicotinate-nucleotide--dimethylbenzimidazole phosphoribosyltransferase (375 aa).

E323 acts as the Proton acceptor in catalysis. The tract at residues 344-375 (LPEKPEELEAGEGPEAAEESSPEPENPEALAE) is disordered. The segment covering 351–375 (LEAGEGPEAAEESSPEPENPEALAE) has biased composition (acidic residues).

The protein belongs to the CobT family.

It catalyses the reaction 5,6-dimethylbenzimidazole + nicotinate beta-D-ribonucleotide = alpha-ribazole 5'-phosphate + nicotinate + H(+). It functions in the pathway nucleoside biosynthesis; alpha-ribazole biosynthesis; alpha-ribazole from 5,6-dimethylbenzimidazole: step 1/2. In terms of biological role, catalyzes the synthesis of alpha-ribazole-5'-phosphate from nicotinate mononucleotide (NAMN) and 5,6-dimethylbenzimidazole (DMB). The chain is Nicotinate-nucleotide--dimethylbenzimidazole phosphoribosyltransferase from Streptomyces avermitilis (strain ATCC 31267 / DSM 46492 / JCM 5070 / NBRC 14893 / NCIMB 12804 / NRRL 8165 / MA-4680).